A 441-amino-acid chain; its full sequence is 23S rRNA (uracil(1939)-C(5))-methyltransferase RlmD (441 aa).

Residues 1-56 (MSIDSLDMEARGVGRLLNEDGTPGKVIFVEGALPGETVSYRSFRRKPSYEQAHLVE) form the TRAM domain. The [4Fe-4S] cluster site is built by C69, C75, C78, and C157. 6 residues coordinate S-adenosyl-L-methionine: Q265, F294, N299, E315, N343, and D364. The Nucleophile role is filled by C397.

Belongs to the class I-like SAM-binding methyltransferase superfamily. RNA M5U methyltransferase family. RlmD subfamily.

It carries out the reaction uridine(1939) in 23S rRNA + S-adenosyl-L-methionine = 5-methyluridine(1939) in 23S rRNA + S-adenosyl-L-homocysteine + H(+). Catalyzes the formation of 5-methyl-uridine at position 1939 (m5U1939) in 23S rRNA. The chain is 23S rRNA (uracil(1939)-C(5))-methyltransferase RlmD from Cupriavidus necator (strain ATCC 17699 / DSM 428 / KCTC 22496 / NCIMB 10442 / H16 / Stanier 337) (Ralstonia eutropha).